The following is a 436-amino-acid chain: Histone acetyltransferase type B subunit 2 (436 aa).

WD repeat units lie at residues 136-176 (DHKG…SLPT), 187-227 (GHTK…KGNK), 237-277 (HHSS…TTRA), 284-324 (QHRD…TKLH), and 328-368 (SHTD…EEQT). Residues 370–374 (EDAQD) are interaction with the histone H4 N-terminus. The WD 6 repeat unit spans residues 385-425 (GHTNRISDFSWNLNDPWVLCSAAEDNLLQVWKVADAIVGKD).

It belongs to the WD repeat RBAP46/RBAP48/MSI1 family. In terms of assembly, component of the HAT-B complex composed of at least hat1 and hat2. The HAT-B complex binds to histone H4 tail.

It is found in the cytoplasm. The protein resides in the nucleus. In terms of biological role, regulatory subunit of the histone acetylase B (HAT-B) complex. The complex acetylates 'Lys-12' of histone H4 which is required for telomeric silencing. The polypeptide is Histone acetyltransferase type B subunit 2 (hat2) (Aspergillus fumigatus (strain ATCC MYA-4609 / CBS 101355 / FGSC A1100 / Af293) (Neosartorya fumigata)).